The primary structure comprises 147 residues: Large ribosomal subunit protein uL13 (147 aa).

The protein belongs to the universal ribosomal protein uL13 family. As to quaternary structure, part of the 50S ribosomal subunit.

This protein is one of the early assembly proteins of the 50S ribosomal subunit, although it is not seen to bind rRNA by itself. It is important during the early stages of 50S assembly. This Mycolicibacterium smegmatis (strain ATCC 700084 / mc(2)155) (Mycobacterium smegmatis) protein is Large ribosomal subunit protein uL13.